The chain runs to 362 residues: E3 ubiquitin-protein ligase TM129 (362 aa).

Residues 1–6 (MDSPEV) are Lumenal-facing. A helical membrane pass occupies residues 7 to 27 (TFTLAYLVFAVCFVFTPNEFH). Over 28–56 (AAGLTVQNLLSGWLGSEDAAFVPFHLRRT) the chain is Cytoplasmic. Residues 57–77 (AATLLCHSLLPLGYYVGMCLA) traverse the membrane as a helical segment. Residues 78 to 94 (ASEKRLHALSQAPEAWR) lie on the Lumenal side of the membrane. A helical transmembrane segment spans residues 95 to 115 (LFLLLAVTLPSIACILIYYWS). Over 116–362 (RDRWACHPLA…FCILDVCTVR (247 aa)) the chain is Cytoplasmic. An RING-type; degenerate zinc finger spans residues 285 to 350 (CIGCMQTRAS…ASRVPCPTCR (66 aa)).

It belongs to the TMEM129 family. In terms of assembly, integral component of ER-resident dislocation complexes.

Its subcellular location is the endoplasmic reticulum membrane. The catalysed reaction is S-ubiquitinyl-[E2 ubiquitin-conjugating enzyme]-L-cysteine + [acceptor protein]-L-lysine = [E2 ubiquitin-conjugating enzyme]-L-cysteine + N(6)-ubiquitinyl-[acceptor protein]-L-lysine.. It functions in the pathway protein modification; protein ubiquitination. Functionally, E3 ubiquitin-protein ligase involved in ER-associated protein degradation, preferentially associates with the E2 enzyme UBE2J2. Exploited by viral US11 proteins to mediate HLA class I proteins degradation. The sequence is that of E3 ubiquitin-protein ligase TM129 (TMEM129) from Homo sapiens (Human).